We begin with the raw amino-acid sequence, 360 residues long: WD repeat domain phosphoinositide-interacting protein 4 (360 aa).

7 WD repeats span residues 1–34 (MTQQ…IYNV), 40–84 (KGHL…IWDD), 92–128 (KEKL…VYSF), 133–174 (RKLF…LVDL), 183–222 (SAPF…LFDT), 227–266 (KLVE…IFAL), and 284–329 (GPMI…ICVD). Positions 231–234 (LRRG) match the L/FRRG motif motif.

The protein belongs to the WD repeat PROPPIN family. Interacts with WIPI1. Interacts with WIPI2. Interacts with ATG2A and ATG2B. Interacts with ULK1. May interact with the PRKAA1, PRKAA2, PRKAB1 and PRKAG1 subunits of the AMPK kinase. May interact with NUDC. In terms of tissue distribution, ubiquitously expressed, with high expression in skeletal muscle and heart. Weakly expressed in liver and placenta. Expression is down-regulated in pancreatic and in kidney tumors.

It is found in the preautophagosomal structure. It localises to the cytoplasm. With respect to regulation, activated upon amino-acid starvation. Its function is as follows. Component of the autophagy machinery that controls the major intracellular degradation process by which cytoplasmic materials are packaged into autophagosomes and delivered to lysosomes for degradation. Binds phosphatidylinositol 3-phosphate (PtdIns3P). Activated by the STK11/AMPK signaling pathway upon starvation, WDR45 is involved in autophagosome assembly downstream of WIPI2, regulating the size of forming autophagosomes. Together with WIPI1, promotes ATG2 (ATG2A or ATG2B)-mediated lipid transfer by enhancing ATG2-association with phosphatidylinositol 3-monophosphate (PI3P)-containing membranes. Probably recruited to membranes through its PtdIns3P activity. The sequence is that of WD repeat domain phosphoinositide-interacting protein 4 (WDR45) from Homo sapiens (Human).